A 155-amino-acid polypeptide reads, in one-letter code: Glutamyl-tRNA(Gln) amidotransferase subunit C, chloroplastic/mitochondrial (155 aa).

Residues 1-52 (MATRALLAVIYASPNRCYISPSRIKIQSLTCSSSSHYYQRQSRKNHRIARSY) constitute a chloroplast and mitochondrion transit peptide.

It belongs to the GatC family. Subunit of the heterotrimeric GatCAB amidotransferase (AdT) complex, composed of A, B and C subunits.

The protein localises to the mitochondrion. It localises to the plastid. Its subcellular location is the chloroplast. The catalysed reaction is L-glutamyl-tRNA(Gln) + L-glutamine + ATP + H2O = L-glutaminyl-tRNA(Gln) + L-glutamate + ADP + phosphate + H(+). Functionally, allows the formation of correctly charged Gln-tRNA(Gln) through the transamidation of misacylated Glu-tRNA(Gln) in chloroplasts and mitochondria. The reaction takes place in the presence of glutamine and ATP through an activated gamma-phospho-Glu-tRNA(Gln). This chain is Glutamyl-tRNA(Gln) amidotransferase subunit C, chloroplastic/mitochondrial, found in Arabidopsis thaliana (Mouse-ear cress).